We begin with the raw amino-acid sequence, 333 residues long: MKKIGYLGLGAWGYCLASLLASKGHKVVCWTTKPELAKHLTDTREHPLLAGHLSKGEMTFTTDMSEALKDVDMIVESVTSAGLRSVFEQVRSLGLPNCPIVITSKGIEQDTGMILPEVVIEVLGEEFRSLIGFLSGPSFAQEVIRELPTSVVGTGYTVEVIQEICETFMTPTFRVYPNTDILGVAFGGALKNIIGIACGISDGLALGCSSKAALMTRGLHEIRKLSVACGCKAETLNGLAGMGDLCVTCSSPISRNFRFGTLLAQGLSTEQARNRIGMVVEGAYTCVSALQLSKQHKIIMPISEAVYNIIQGTIKPIEAVSALMKRTIKEEHL.

NADPH-binding residues include Trp12, Lys33, and Lys105. Sn-glycerol 3-phosphate contacts are provided by Lys105, Gly136, and Ser138. Ala140 is an NADPH binding site. Sn-glycerol 3-phosphate contacts are provided by Lys191, Asp244, Ser254, Arg255, and Asn256. The active-site Proton acceptor is Lys191. Arg255 contributes to the NADPH binding site. Residues Val279 and Glu281 each contribute to the NADPH site.

The protein belongs to the NAD-dependent glycerol-3-phosphate dehydrogenase family.

Its subcellular location is the cytoplasm. It catalyses the reaction sn-glycerol 3-phosphate + NAD(+) = dihydroxyacetone phosphate + NADH + H(+). The catalysed reaction is sn-glycerol 3-phosphate + NADP(+) = dihydroxyacetone phosphate + NADPH + H(+). It participates in membrane lipid metabolism; glycerophospholipid metabolism. Functionally, catalyzes the reduction of the glycolytic intermediate dihydroxyacetone phosphate (DHAP) to sn-glycerol 3-phosphate (G3P), the key precursor for phospholipid synthesis. In Protochlamydia amoebophila (strain UWE25), this protein is Glycerol-3-phosphate dehydrogenase [NAD(P)+].